The following is a 457-amino-acid chain: Protein N-terminal amidase (457 aa).

The region spanning 19-453 (LKVLVIQLNP…EGAILREVQF (435 aa)) is the CN hydrolase domain. Glutamate 63 serves as the catalytic Proton acceptor. The active-site Proton donor is lysine 136. The active-site Nucleophile is cysteine 187.

Belongs to the carbon-nitrogen hydrolase superfamily.

Its function is as follows. Deamidates N-terminal Asn and Gln. Component of a targeting complex in the N-end rule pathway. The sequence is that of Protein N-terminal amidase (NTA1) from Saccharomyces cerevisiae (strain ATCC 204508 / S288c) (Baker's yeast).